A 535-amino-acid polypeptide reads, in one-letter code: MALNLAQSAAAAACFATAGDARRAASVVAMPSSSSSATTSLRMKRQAACEPVACRAVARHVAAAAASSRRNGVPVFVMMPLDTVSKCGSALNRRKAVAASLAALKSAGVEGIMVDVWWGIVESEGPGRYNFDGYVELMEMARKTGLKVQAVMSFHQCGGNVGDSVNIPLPRWVVEEMEKDNDLAYTDQWGRRNFEYISLGCDAMPVFKGRTPVECYTDFMRAFRDHFASFLGDTIVEIQVGMGPAGELRYPSYPESNGTWRFPGIGAFQCNDRYMRSSLKAAAEARGKPEWGHGGPTDAGGYNNWPEDTVFFRGDCGGWSTEYGEFFLSWYSQMLLEHGERVLSGATSVFGDGAGAKISVKVAGIHWHYGTRSHAPELTAGYYNTRHRDGYLPIARMLARHGAVLNFTCVEMRDHEQPQEAQCMPEALVRQVAAAARAAGVGLAGENALPRYDGTAHDQVVAAAADRAAEDRMVAFTYLRMGPDLFHPDNWRRFVAFVRRMSESGSPREAAESAAHGVAQATGSLVHEAAVALRS.

A chloroplast-targeting transit peptide spans 1-36 (MALNLAQSAAAAACFATAGDARRAASVVAMPSSSSS). Substrate-binding residues include D115, H155, and D163. E247 functions as the Proton donor in the catalytic mechanism. K361, H366, and T408 together coordinate substrate. The active-site Proton acceptor is E446. Substrate is bound by residues 447 to 448 (NA) and R480.

The protein belongs to the glycosyl hydrolase 14 family.

The protein resides in the plastid. The protein localises to the chloroplast. It catalyses the reaction Hydrolysis of (1-&gt;4)-alpha-D-glucosidic linkages in polysaccharides so as to remove successive maltose units from the non-reducing ends of the chains.. In terms of biological role, possesses beta-amylase activity in vitro. May be involved in cold resistance by mediating the accumulation of maltose upon freezing stress, thus contributing to the protection of membranes. The chain is Beta-amylase 1, chloroplastic from Oryza sativa subsp. japonica (Rice).